Reading from the N-terminus, the 306-residue chain is Glutathione transport system permease protein GsiC (306 aa).

At 1–8 the chain is on the cytoplasmic side; the sequence is MLNYVIKR. The chain crosses the membrane as a helical span at residues 9–29; sequence LLGLIPTLFIVSVLVFLFVHM. At 30–102 the chain is on the periplasmic side; the sequence is LPGDPARLIA…SRFMPTLWLT (73 aa). Positions 95-292 constitute an ABC transmembrane type-1 domain; the sequence is FMPTLWLTIT…LEFILINLVV (198 aa). A helical transmembrane segment spans residues 103 to 123; sequence ITSMVWAVIFGMAAGIIAAVW. Topologically, residues 124 to 134 are cytoplasmic; the sequence is RNRWPDRLSMT. The helical transmembrane segment at 135 to 155 threads the bilayer; that stretch reads IAVSGISFPAFALGMLLIQVF. The Periplasmic segment spans residues 156 to 168; the sequence is SVELGWLPTVGAD. The helical transmembrane segment at 169 to 189 threads the bilayer; it reads SWQHYILPSLTLGAAVAAVMA. The Cytoplasmic portion of the chain corresponds to 190 to 228; it reads RFTRASFVDVLSEDYMRTARAKGVSETWVVLKHGLRNAM. Residues 229–249 traverse the membrane as a helical segment; that stretch reads IPVVTMMGLQFGFLLGGSIVV. Residues 250–277 lie on the Periplasmic side of the membrane; it reads EKVFNWPGLGRLLVDSVEMRDYPVIQAE. Residues 278–298 traverse the membrane as a helical segment; the sequence is ILLFSLEFILINLVVDVLYAA. Residues 299-306 lie on the Cytoplasmic side of the membrane; it reads INPAIRYK.

The protein belongs to the binding-protein-dependent transport system permease family. As to quaternary structure, the complex is composed of two ATP-binding proteins (GsiA), two transmembrane proteins (GsiC and GsiD) and a solute-binding protein (GsiB).

It is found in the cell inner membrane. In terms of biological role, part of the ABC transporter complex GsiABCD involved in glutathione import. Probably responsible for the translocation of the substrate across the membrane. The chain is Glutathione transport system permease protein GsiC from Escherichia coli O6:H1 (strain CFT073 / ATCC 700928 / UPEC).